The following is an 86-amino-acid chain: Evasin-3 (86 aa).

A signal peptide spans 1–20 (MRALLARLLLCVLVVSDSKG). Disulfide bonds link Cys-42–Cys-57, Cys-46–Cys-59, and Cys-53–Cys-70. Asn-45 carries N-linked (GlcNAc...) asparagine glycosylation. Asn-76 carries N-linked (GlcNAc...) asparagine glycosylation.

As to quaternary structure, monomer.

The protein resides in the secreted. In terms of biological role, salivary chemokine-binding protein which shows chemokine neutralizing activity and binds to host chemokines CXCL1, CXCL2, CXCL3, CXCL5, CXCL6 and CXCL8. Binds to CXCL8 with 1:1 stoichiometry. Disrupts CXCL8 homodimer formation, disrupts the glycosaminoglycan-binding site of CXCL8 and inhibits the interaction of CXCL8 with CXCR2. The sequence is that of Evasin-3 from Rhipicephalus sanguineus (Brown dog tick).